The sequence spans 596 residues: DNA mismatch repair protein MutL (596 aa).

Belongs to the DNA mismatch repair MutL/HexB family.

Functionally, this protein is involved in the repair of mismatches in DNA. It is required for dam-dependent methyl-directed DNA mismatch repair. May act as a 'molecular matchmaker', a protein that promotes the formation of a stable complex between two or more DNA-binding proteins in an ATP-dependent manner without itself being part of a final effector complex. The protein is DNA mismatch repair protein MutL of Leptospira borgpetersenii serovar Hardjo-bovis (strain L550).